Consider the following 298-residue polypeptide: Interferon-inducible double-stranded RNA-dependent protein kinase activator A homolog B (298 aa).

DRBM domains follow at residues 20-87, 112-180, and 225-293; these read TPIQ…ILRG, NPVG…KFKT, and DYVK…YLKI.

The protein belongs to the PRKRA family. Homodimer. Interacts with dicer1 and eif2ak2/pkr. Also able to interact with dsRNA. Associates with ribosomes. In terms of tissue distribution, expressed in brain, heart, kidney, liver, nerve and spleen.

Its subcellular location is the cytoplasm. It is found in the perinuclear region. The protein localises to the nucleus. The protein resides in the nucleolus. Activates eif2ak2/pkr in the absence of double-stranded RNA (dsRNA), leading to phosphorylation of eif2s1/efi2-alpha and inhibition of translation and induction of apoptosis. Required for siRNA production by dicer1 and for subsequent siRNA-mediated post-transcriptional gene silencing. Does not seem to be required for processing of pre-miRNA to miRNA by dicer1. The sequence is that of Interferon-inducible double-stranded RNA-dependent protein kinase activator A homolog B (prkra-b) from Xenopus laevis (African clawed frog).